The chain runs to 393 residues: Probable acetyl-CoA acetyltransferase (393 aa).

Cys-88 (acyl-thioester intermediate) is an active-site residue. Catalysis depends on proton acceptor residues His-349 and Cys-379.

The protein belongs to the thiolase-like superfamily. Thiolase family.

The enzyme catalyses 2 acetyl-CoA = acetoacetyl-CoA + CoA. The chain is Probable acetyl-CoA acetyltransferase (fadA4) from Mycobacterium leprae (strain TN).